Consider the following 338-residue polypeptide: Ketol-acid reductoisomerase (NADP(+)) (338 aa).

Positions 2 to 182 (TKMYYEEDTD…GGARAGVLET (181 aa)) constitute a KARI N-terminal Rossmann domain. NADP(+)-binding positions include 25–28 (YGSQ), serine 51, serine 53, and 83–86 (DELQ). Histidine 108 is an active-site residue. Glycine 134 contacts NADP(+). In terms of domain architecture, KARI C-terminal knotted spans 183–330 (TFRTETETDL…SEIRKLYCWN (148 aa)). Residues aspartate 191, glutamate 195, glutamate 227, and glutamate 231 each contribute to the Mg(2+) site. Serine 252 is a substrate binding site.

Belongs to the ketol-acid reductoisomerase family. The cofactor is Mg(2+).

It catalyses the reaction (2R)-2,3-dihydroxy-3-methylbutanoate + NADP(+) = (2S)-2-acetolactate + NADPH + H(+). The catalysed reaction is (2R,3R)-2,3-dihydroxy-3-methylpentanoate + NADP(+) = (S)-2-ethyl-2-hydroxy-3-oxobutanoate + NADPH + H(+). It participates in amino-acid biosynthesis; L-isoleucine biosynthesis; L-isoleucine from 2-oxobutanoate: step 2/4. It functions in the pathway amino-acid biosynthesis; L-valine biosynthesis; L-valine from pyruvate: step 2/4. In terms of biological role, involved in the biosynthesis of branched-chain amino acids (BCAA). Catalyzes an alkyl-migration followed by a ketol-acid reduction of (S)-2-acetolactate (S2AL) to yield (R)-2,3-dihydroxy-isovalerate. In the isomerase reaction, S2AL is rearranged via a Mg-dependent methyl migration to produce 3-hydroxy-3-methyl-2-ketobutyrate (HMKB). In the reductase reaction, this 2-ketoacid undergoes a metal-dependent reduction by NADPH to yield (R)-2,3-dihydroxy-isovalerate. This is Ketol-acid reductoisomerase (NADP(+)) from Clostridium botulinum (strain Eklund 17B / Type B).